Here is a 260-residue protein sequence, read N- to C-terminus: 2-amino-3,7-dideoxy-D-threo-hept-6-ulosonate synthase 1 (260 aa).

D26 serves as the catalytic Proton acceptor. 1-deoxy-D-threo-hexo-2,5-diulose 6-phosphate is bound by residues 26-30 and 144-146; these read DHGIT and YPR. Y144 serves as the catalytic Proton donor. The Schiff-base intermediate with substrate role is filled by K172. 1-deoxy-D-threo-hexo-2,5-diulose 6-phosphate-binding positions include 194 to 195 and 221 to 222; these read GG and GR.

It belongs to the DeoC/FbaB aldolase family. ADHS subfamily. In terms of assembly, homodecamer.

The catalysed reaction is 1-deoxy-D-threo-hexo-2,5-diulose 6-phosphate + L-aspartate 4-semialdehyde = 2,3-dioxopropyl phosphate + 2-amino-2,3,7-trideoxy-D-lyxo-hept-6-ulosonate. Its function is as follows. Catalyzes a transaldol reaction between 6-deoxy-5-ketofructose 1-phosphate (DKFP) and L-aspartate semialdehyde (ASA) with an elimination of hydroxypyruvaldehyde phosphate to yield 2-amino-3,7-dideoxy-D-threo-hept-6-ulosonate (ADH). Plays a key role in an alternative pathway of the biosynthesis of 3-dehydroquinate (DHQ), which is involved in the canonical pathway for the biosynthesis of aromatic amino acids. The chain is 2-amino-3,7-dideoxy-D-threo-hept-6-ulosonate synthase 1 from Archaeoglobus fulgidus (strain ATCC 49558 / DSM 4304 / JCM 9628 / NBRC 100126 / VC-16).